Reading from the N-terminus, the 548-residue chain is Glutamate--tRNA ligase (548 aa).

Residues 102–112 (PSPSGPLHIGH) carry the 'HIGH' region motif.

The protein belongs to the class-I aminoacyl-tRNA synthetase family. Glutamate--tRNA ligase type 2 subfamily.

The protein resides in the cytoplasm. The catalysed reaction is tRNA(Glu) + L-glutamate + ATP = L-glutamyl-tRNA(Glu) + AMP + diphosphate. Catalyzes the attachment of glutamate to tRNA(Glu) in a two-step reaction: glutamate is first activated by ATP to form Glu-AMP and then transferred to the acceptor end of tRNA(Glu). This chain is Glutamate--tRNA ligase, found in Thermoplasma acidophilum (strain ATCC 25905 / DSM 1728 / JCM 9062 / NBRC 15155 / AMRC-C165).